Reading from the N-terminus, the 242-residue chain is MEEGWDFDSSPPSFKQVQPLLLTLFSLSGTGWLINYITTIRTAYRDRTPGVSLVALTNNLAWELVFAILHPPPLPVAKVILRSWLFVDIFVIYTTAKFARSSSISSNAPLLHRYLHLFVLFGILGFFSGHWALSVLLSPIKAFYWSGMMCLVVMSGTALGILVQRGHTRGMSYGMWFSRFVGSIFAVASLFLRSTYWPQVWGWSDNILMRWFAGAFVVLDGLYGVCFWYTRRVEQRQRDKVA.

The next 7 helical transmembrane spans lie at 20–40 (LLLT…ITTI), 50–69 (GVSL…FAIL), 79–101 (VILR…FARS), 117–137 (LFVL…SVLL), 143–163 (FYWS…GILV), 172–192 (SYGM…SLFL), and 207–227 (ILMR…GVCF).

It belongs to the paxB family.

It is found in the membrane. It participates in secondary metabolite biosynthesis; terpenoid biosynthesis. In terms of biological role, non-reducing polyketide synthase; part of the cluster A that mediates the biosynthesis of chevalone E and its oxidized derivatives that possess a unique five-membered lactone ring and can synergistically enhance the cytotoxicity of doxorubicin (DOX) in breast cancer cells. Within the pathway, cle7 takes part to the biosynthesis of the molecular scaffold by catalyzing the cyclization of the prenyl group initiated by protonation and ring-opening of the epoxide to produce the chevalone E intermediate. The molecular scaffold is commonly biosynthesized by a series of enzymes including the non-reducing polyketide synthase (NR-PKS) cle1 that produces the alpha-pyrone triacetic acid lactone (TAL); The membrane-bound prenyltransferase cle5 that accepts TAL as its substrate to perform a C-3 geranylgeranylation reaction, in which the pathway-dedicated GGPS cle6 is required to provide GGPP, the other substrate of cle5; the FAD-dependent monooxygenase Cle3 that forms an (S)-epoxide ring at the terminal olefin of the geranylgeranyl group; and the terpene cyclase Cle7 that catalyzes the cyclization of the prenyl group that yields the pentacyclic pathway intermediate chevalone E. Chevalone E can derivatize into seven new oxidized analogs by the cytochrome P450 monooxygenases cle2 (acting at C-20) and cle4 (acting at C-11 and C-12). This Aspergillus versicolor protein is Terpene cyclase cle7.